The primary structure comprises 436 residues: Trigger factor (436 aa).

Residues 162–247 (GDRVIIDFEG…LNNVSEATLP (86 aa)) enclose the PPIase FKBP-type domain.

It belongs to the FKBP-type PPIase family. Tig subfamily.

It is found in the cytoplasm. It carries out the reaction [protein]-peptidylproline (omega=180) = [protein]-peptidylproline (omega=0). In terms of biological role, involved in protein export. Acts as a chaperone by maintaining the newly synthesized protein in an open conformation. Functions as a peptidyl-prolyl cis-trans isomerase. The sequence is that of Trigger factor from Neisseria meningitidis serogroup C (strain 053442).